The primary structure comprises 984 residues: Putative formate dehydrogenase SA2102 (984 aa).

The 2Fe-2S ferredoxin-type domain occupies 3 to 79 (EHLVVTLDGK…PMTVNTVNND (77 aa)). C37, C48, C51, and C63 together coordinate [2Fe-2S] cluster. The 4Fe-4S His(Cys)3-ligated-type domain maps to 79-119 (DVKDAQKEALDRILEKHMLYCTVCDYNNGDCEIHNTMDAWG). Residues H95, C99, C102, C109, C147, C150, C153, C157, C190, C193, C196, C200, C264, C267, C271, and C299 each contribute to the [4Fe-4S] cluster site. 4Fe-4S ferredoxin-type domains follow at residues 138-165 (PFYRYDPNQCILCGRCVEACQDIEVNET) and 181-211 (NDVPINESSCVSCGQCATVCPCNAMMEVNME). A formate dehydrogenase region spans residues 252 to 984 (MRKERIKKTK…YVFPGNQVDK (733 aa)). The region spanning 257–313 (IKKTKTVCTYCGVGCSFEVWTKDREILKVQPSHDSPANKIATCVKGKFSWGHINSDQ) is the 4Fe-4S Mo/W bis-MGD-type domain.

The protein in the C-terminal section; belongs to the prokaryotic molybdopterin-containing oxidoreductase family. The cofactor is [2Fe-2S] cluster. [4Fe-4S] cluster is required as a cofactor. It depends on Mo-bis(molybdopterin guanine dinucleotide) as a cofactor.

The enzyme catalyses formate + NAD(+) = CO2 + NADH. The sequence is that of Putative formate dehydrogenase SA2102 from Staphylococcus aureus (strain N315).